The following is a 131-amino-acid chain: Small ribosomal subunit protein uS8 (131 aa).

Belongs to the universal ribosomal protein uS8 family. In terms of assembly, part of the 30S ribosomal subunit. Contacts proteins S5 and S12.

Functionally, one of the primary rRNA binding proteins, it binds directly to 16S rRNA central domain where it helps coordinate assembly of the platform of the 30S subunit. In Sorangium cellulosum (strain So ce56) (Polyangium cellulosum (strain So ce56)), this protein is Small ribosomal subunit protein uS8.